The primary structure comprises 229 residues: Flagellar L-ring protein (229 aa).

An N-terminal signal peptide occupies residues 1-25; the sequence is MKQVRLLPPAPVRAVCALAVAALAG. Cys-26 carries N-palmitoyl cysteine lipidation. Cys-26 carries the S-diacylglycerol cysteine lipid modification.

Belongs to the FlgH family. As to quaternary structure, the basal body constitutes a major portion of the flagellar organelle and consists of four rings (L,P,S, and M) mounted on a central rod.

It is found in the cell outer membrane. It localises to the bacterial flagellum basal body. Assembles around the rod to form the L-ring and probably protects the motor/basal body from shearing forces during rotation. In Burkholderia ambifaria (strain ATCC BAA-244 / DSM 16087 / CCUG 44356 / LMG 19182 / AMMD) (Burkholderia cepacia (strain AMMD)), this protein is Flagellar L-ring protein.